A 292-amino-acid chain; its full sequence is uncharacterized protein (292 aa).

Residue Lys-8 forms a Glycyl lysine isopeptide (Lys-Gly) (interchain with G-Cter in SUMO2) linkage. The disordered stretch occupies residues 47–67; it reads TKRKMLPSSSSRMRSDGFDEE. Lys-76 participates in a covalent cross-link: Glycyl lysine isopeptide (Lys-Gly) (interchain with G-Cter in SUMO2). Asn-94 is modified (phosphothreonine). Phosphoserine occurs at positions 96 and 97. Residues 122–292 are disordered; the sequence is ETDSDQQDIT…ERSAESSEDD (171 aa). Thr-123 carries the post-translational modification Phosphothreonine. Ser-125 and Asp-126 each carry phosphoserine. The segment covering 128–140 has biased composition (polar residues); that stretch reads QDITNGKKTSPQV. Over residues 147-173 the composition is skewed to basic residues; it reads SRKHKKSKKSHKKKQKKRSHKKQKKSK. Over residues 180 to 194 the composition is skewed to polar residues; sequence TADSSSEFSEETGAS. Basic residues-rich tracts occupy residues 197 to 215 and 247 to 259; these read RKGKQPHKRKKKSRKKSLK and KKTKRKKREKKAH. The span at 280-292 shows a compositional bias: basic and acidic residues; it reads ATDERSAESSEDD.

This is an uncharacterized protein from Homo sapiens (Human).